Reading from the N-terminus, the 551-residue chain is MSNYAPFIKPYVEYNEHGWGPCEVPELDVPYQPFCKSDRLGKICDWTAMVPEKKFPSKYASTFGNNSQYAYFYEDDDSTFHLVDTTGSKATKPYQRGRYRPNMRNNVRSRGRTGRGTPNIASLGGSTAGGATASTTKYGKGRNTRNTQNMGRRFGRNAPTRIRESSVMVQSDWVSIEEIDFPRLLKLALPNIKDGKDIATCGWLEFYDKLYDRVNLRNEKPLQKMDRVVHTVTTTDDPVIRRLSRTMGNVFATDEILSTIMCCTRSNYSWDVVVEKLGTKVFLDKRYNDQFDLLTVNETSVEPPMDEEGSINSAHSLAMEATLINHNFSQQVLRIGDQEPRFMFEEPNPFEEPGVDLASIGYRYRQWDLGNDVVLIARCKHNGVIQGPNGDVQFLSIKALNEWDSKVTNSVEWRQKLDTQRGAVLASELRNNACKLARWTVEAVLAGSDQLKLGYVSRMNPRDHLRHVILGTQQFKPQEFATQINLNMDNAWGVLRCLIDLVMRQPDGKYLIMKDPNKPMIRLYDVPENAFDSDGDEEEESSDPLSNSNDN.

Residues 91–154 are disordered; sequence TKPYQRGRYR…RNTQNMGRRF (64 aa). Positions 95-113 are enriched in basic residues; it reads QRGRYRPNMRNNVRSRGRT. The span at 121–136 shows a compositional bias: low complexity; that stretch reads ASLGGSTAGGATASTT. The interval 290 to 304 is RNA gate; that stretch reads QFDLLTVNETSVEPP. The segment at 527 to 551 is disordered; sequence PENAFDSDGDEEEESSDPLSNSNDN. The segment covering 531-542 has biased composition (acidic residues); it reads FDSDGDEEEESS.

This sequence belongs to the eIF-3 subunit D family. Component of the eukaryotic translation initiation factor 3 (eIF-3) complex. The eIF-3 complex interacts with pix.

The protein resides in the cytoplasm. MRNA cap-binding component of the eukaryotic translation initiation factor 3 (eIF-3) complex, which is involved in protein synthesis of a specialized repertoire of mRNAs and, together with other initiation factors, stimulates binding of mRNA and methionyl-tRNAi to the 40S ribosome. The eIF-3 complex specifically targets and initiates translation of a subset of mRNAs involved in cell proliferation. In the eIF-3 complex, eif3d specifically recognizes and binds the 7-methylguanosine cap of a subset of mRNAs. The chain is Eukaryotic translation initiation factor 3 subunit D-2 from Drosophila melanogaster (Fruit fly).